The chain runs to 299 residues: MYFPIVALIGRYQDTGLDAPLTALAQMLTQAGRRVLVEAETARNAGVSGYPVADWDEIGRTATLAVVMGGDGTVLGAARHLAPYGVPLIGINHGRLGFITDIPLQDAHDALGRVLEGNYQAEDRMLLQGGVWRGEQQMYSASAVNDVVLNRAGRGGMIEVRVELDGAFMYTQRADGLIIATPTGSTAYSLSANGPILHPGMNAMVLVPVAPQTLSNRPIVIPDSGVLNMTLTAMGRVEIGASVHFDMQTWSDLQPGDRITVQRAPHIIRFVHPEGYSFFSTLRRKLHWNLMPQATDNLE.

Asp-71 (proton acceptor) is an active-site residue. NAD(+) is bound by residues Asp-71–Gly-72, Asn-145–Asp-146, Arg-173, Asp-175, Thr-186–Ser-191, Ala-210, and Gln-248.

Belongs to the NAD kinase family. The cofactor is a divalent metal cation.

The protein localises to the cytoplasm. It catalyses the reaction NAD(+) + ATP = ADP + NADP(+) + H(+). Involved in the regulation of the intracellular balance of NAD and NADP, and is a key enzyme in the biosynthesis of NADP. Catalyzes specifically the phosphorylation on 2'-hydroxyl of the adenosine moiety of NAD to yield NADP. The sequence is that of NAD kinase from Bordetella pertussis (strain Tohama I / ATCC BAA-589 / NCTC 13251).